The sequence spans 393 residues: S-adenosylmethionine synthase 2 (393 aa).

E9 is a Mg(2+) binding site. H15 provides a ligand contact to ATP. E43 lines the K(+) pocket. Positions 56 and 99 each coordinate L-methionine. ATP contacts are provided by residues 167–169 (DGK), 235–238 (SGRF), D246, 252–253 (RK), A269, K273, and K277. Residue D246 coordinates L-methionine. K277 contacts L-methionine.

It belongs to the AdoMet synthase family. As to quaternary structure, homotetramer. The cofactor is Mn(2+). Mg(2+) is required as a cofactor. Requires Co(2+) as cofactor. K(+) serves as cofactor.

The protein resides in the cytoplasm. It carries out the reaction L-methionine + ATP + H2O = S-adenosyl-L-methionine + phosphate + diphosphate. The protein operates within amino-acid biosynthesis; S-adenosyl-L-methionine biosynthesis; S-adenosyl-L-methionine from L-methionine: step 1/1. Functionally, catalyzes the formation of S-adenosylmethionine from methionine and ATP. The reaction comprises two steps that are both catalyzed by the same enzyme: formation of S-adenosylmethionine (AdoMet) and triphosphate, and subsequent hydrolysis of the triphosphate. This chain is S-adenosylmethionine synthase 2 (METK2), found in Vitis vinifera (Grape).